The chain runs to 723 residues: Catalase-peroxidase (723 aa).

Residues 96–225 (WHAAGSYRVA…LAAVMMGLIY (130 aa)) constitute a cross-link (tryptophyl-tyrosyl-methioninium (Trp-Tyr) (with M-251)). The active-site Proton acceptor is His-97. The segment at residues 225–251 (YVNPEGVDGNPDPLKTAEDVRVTFARM) is a cross-link (tryptophyl-tyrosyl-methioninium (Tyr-Met) (with W-96)). His-266 is a binding site for heme b.

This sequence belongs to the peroxidase family. Peroxidase/catalase subfamily. As to quaternary structure, homodimer or homotetramer. It depends on heme b as a cofactor. In terms of processing, formation of the three residue Trp-Tyr-Met cross-link is important for the catalase, but not the peroxidase activity of the enzyme.

The enzyme catalyses H2O2 + AH2 = A + 2 H2O. It carries out the reaction 2 H2O2 = O2 + 2 H2O. In terms of biological role, bifunctional enzyme with both catalase and broad-spectrum peroxidase activity. This chain is Catalase-peroxidase, found in Alkalilimnicola ehrlichii (strain ATCC BAA-1101 / DSM 17681 / MLHE-1).